The following is a 469-amino-acid chain: ATP synthase subunit beta (469 aa).

155–162 provides a ligand contact to ATP; it reads GGAGVGKT.

The protein belongs to the ATPase alpha/beta chains family. In terms of assembly, F-type ATPases have 2 components, CF(1) - the catalytic core - and CF(0) - the membrane proton channel. CF(1) has five subunits: alpha(3), beta(3), gamma(1), delta(1), epsilon(1). CF(0) has three main subunits: a(1), b(2) and c(9-12). The alpha and beta chains form an alternating ring which encloses part of the gamma chain. CF(1) is attached to CF(0) by a central stalk formed by the gamma and epsilon chains, while a peripheral stalk is formed by the delta and b chains.

It is found in the cell inner membrane. The catalysed reaction is ATP + H2O + 4 H(+)(in) = ADP + phosphate + 5 H(+)(out). Functionally, produces ATP from ADP in the presence of a proton gradient across the membrane. The catalytic sites are hosted primarily by the beta subunits. The sequence is that of ATP synthase subunit beta from Syntrophobacter fumaroxidans (strain DSM 10017 / MPOB).